Here is a 233-residue protein sequence, read N- to C-terminus: Bcl-2-like protein 1 (233 aa).

A BH4 motif is present at residues Ser4–Trp24. The tract at residues Asp29–His71 is disordered. Position 49 is a phosphoserine; by PLK3 (Ser49). Ser62 is modified (phosphoserine; by CDK1). Positions Val86–Arg100 match the BH3 motif. The BH1 signature appears at Glu129–Gly148. A BH2 motif is present at residues Pro180–Tyr195. The chain crosses the membrane as a helical span at residues Phe210 to Leu226.

Belongs to the Bcl-2 family. In terms of assembly, homodimer. Heterodimers with BAX, BAK or BCL2. Heterodimerization with BAX does not seem to be required for anti-apoptotic activity. Interacts with BCL2L11. Interacts with BAD. Interacts with SIVA1 isoform 1; the interaction inhibits the anti-apoptotic activity. Interacts with BECN1 and PGAM5. Interacts with IKZF3. Interacts with HEBP2. Interacts with BOP. Interacts with p53/TP53 and BBC3; interaction with BBC3 disrupts the interaction with p53/TP53. Interacts with DNM1L and CLTA; DNM1L and BCL2L1 may form a complex in synaptic vesicles that also contains clathrin and MFF. Interacts with ATP5F1A and ATP5F1B; the interactions mediate the association of BCL2L1 with the mitochondrial membrane ATP synthase F(1)F(0) ATP synthase. Interacts with VDAC1. Interacts (via the loop between motifs BH4 and BH3) with NLRP1 (via LRR repeats), but not with NLRP2, NLRP3, NLRP4, PYCARD, nor MEFV. Interacts with BCL2L11 (via BH3). Interacts with RNF183. Interacts with GIMAP3/IAN4. Interacts with GIMAP5 and HSPA8/HSC70; the interaction between HSPA8 and BCL2L1 is impaired in the absence of GIMAP5. Interacts with CLU (isoform 4); this interaction releases and activates BAX and promotes cell death. In terms of processing, proteolytically cleaved by caspases during apoptosis. The cleaved protein, lacking the BH4 motif, has pro-apoptotic activity. Post-translationally, phosphorylated on Ser-62 by CDK1. This phosphorylation is partial in normal mitotic cells, but complete in G2-arrested cells upon DNA-damage, thus promoting subsequent apoptosis probably by triggering caspases-mediated proteolysis. Phosphorylated by PLK3, leading to regulate the G2 checkpoint and progression to cytokinesis during mitosis. Phosphorylation at Ser-49 appears during the S phase and G2, disappears rapidly in early mitosis during prometaphase, metaphase and early anaphase, and re-appears during telophase and cytokinesis. Ubiquitinated by RNF183 during prolonged ER stress, leading to degradation by the proteosome.

It is found in the mitochondrion membrane. Its subcellular location is the nucleus membrane. It localises to the mitochondrion matrix. The protein localises to the cytoplasm. The protein resides in the cytoskeleton. It is found in the microtubule organizing center. Its subcellular location is the centrosome. It localises to the cytosol. The protein localises to the cytoplasmic vesicle. The protein resides in the secretory vesicle. It is found in the synaptic vesicle membrane. Its function is as follows. Potent inhibitor of cell death. Inhibits activation of caspases. Appears to regulate cell death by blocking the voltage-dependent anion channel (VDAC) by binding to it and preventing the release of the caspase activator, CYC1, from the mitochondrial membrane. Also acts as a regulator of G2 checkpoint and progression to cytokinesis during mitosis. Regulates presynaptic plasticity, including neurotransmitter release and recovery, number of axonal mitochondria as well as size and number of synaptic vesicle clusters. During synaptic stimulation, increases ATP availability from mitochondria through regulation of mitochondrial membrane ATP synthase F(1)F(0) activity and regulates endocytic vesicle retrieval in hippocampal neurons through association with DMN1L and stimulation of its GTPase activity in synaptic vesicles. May attenuate inflammation impairing NLRP1-inflammasome activation, hence CASP1 activation and IL1B release. The protein is Bcl-2-like protein 1 (BCL2L1) of Sus scrofa (Pig).